The sequence spans 719 residues: Translation initiation factor IF-2 (719 aa).

A compositionally biased stretch (basic and acidic residues) spans 54–67 (NKEETKPNVDEKPP). Disordered regions lie at residues 54 to 75 (NKEETKPNVDEKPPNQDTLTDN) and 97 to 122 (STKNVTPNGNNKKDKKKKNKKDKRKN). The span at 109–122 (KDKKKKNKKDKRKN) shows a compositional bias: basic residues. One can recognise a tr-type G domain in the interval 221–390 (HRSPVVTVMG…LLVSEMSELK (170 aa)). Positions 230–237 (GHVDHGKT) are G1. 230 to 237 (GHVDHGKT) is a GTP binding site. A G2 region spans residues 255 to 259 (GITQH). The G3 stretch occupies residues 276–279 (DTPG). GTP contacts are provided by residues 276–280 (DTPGH) and 330–333 (NKMD). The interval 330 to 333 (NKMD) is G4. The G5 stretch occupies residues 366 to 368 (SAR).

The protein belongs to the TRAFAC class translation factor GTPase superfamily. Classic translation factor GTPase family. IF-2 subfamily.

The protein resides in the cytoplasm. In terms of biological role, one of the essential components for the initiation of protein synthesis. Protects formylmethionyl-tRNA from spontaneous hydrolysis and promotes its binding to the 30S ribosomal subunits. Also involved in the hydrolysis of GTP during the formation of the 70S ribosomal complex. This Alkaliphilus oremlandii (strain OhILAs) (Clostridium oremlandii (strain OhILAs)) protein is Translation initiation factor IF-2.